The primary structure comprises 195 residues: MPRTAAVTRTTKETDITVRLDLDAAPYEQPATGHGFFDHMLDALARHSRLGISISGTGDLHIEPHHLIEDTGITLGQALSQALGDRKGIERYGSAFVPMDETLAHVVLDLSGRAHLAFEPETLDVYGDAGGMTHYHLREFLRGFCNHAGATLHVRLLAGREAHHVIEAVMKAFARALRDAVAVTSDALPSTKGSL.

Belongs to the imidazoleglycerol-phosphate dehydratase family.

The protein localises to the cytoplasm. It carries out the reaction D-erythro-1-(imidazol-4-yl)glycerol 3-phosphate = 3-(imidazol-4-yl)-2-oxopropyl phosphate + H2O. It participates in amino-acid biosynthesis; L-histidine biosynthesis; L-histidine from 5-phospho-alpha-D-ribose 1-diphosphate: step 6/9. The protein is Imidazoleglycerol-phosphate dehydratase of Deinococcus radiodurans (strain ATCC 13939 / DSM 20539 / JCM 16871 / CCUG 27074 / LMG 4051 / NBRC 15346 / NCIMB 9279 / VKM B-1422 / R1).